The sequence spans 172 residues: MNLKEKIRVIEGFPKEGISFKDITTVLNDKEALKYTVDAIVEHLKDKNVDVVVGPEARGFLFGTPVAYALGAAFVPVRKKGKLPCETISSEYDLEYGSDVLQIHKDAIKKGQKVAIVDDLLATGGTMNSVIEMIEKLGGEVVSVDFLIELTDLKGREKIGNYDIMSLVQYDI.

It belongs to the purine/pyrimidine phosphoribosyltransferase family. In terms of assembly, homodimer.

The protein resides in the cytoplasm. It carries out the reaction AMP + diphosphate = 5-phospho-alpha-D-ribose 1-diphosphate + adenine. The protein operates within purine metabolism; AMP biosynthesis via salvage pathway; AMP from adenine: step 1/1. Its function is as follows. Catalyzes a salvage reaction resulting in the formation of AMP, that is energically less costly than de novo synthesis. This Clostridium novyi (strain NT) protein is Adenine phosphoribosyltransferase.